The following is a 385-amino-acid chain: T-box transcription factor TBX10 (385 aa).

The disordered stretch occupies residues 22–61 (TTSSGWEPRLGSPFPSGPCTSSTGAQAVAEPTGQGPKNPR). A DNA-binding region (T-box) is located at residues 69 to 252 (LEMKPLWEEF…SNPFAKGFRE (184 aa)).

It localises to the nucleus. In terms of biological role, probable transcriptional regulator involved in developmental processes. The sequence is that of T-box transcription factor TBX10 (TBX10) from Homo sapiens (Human).